The primary structure comprises 496 residues: Probable malate:quinone oxidoreductase (496 aa).

Belongs to the MQO family. Requires FAD as cofactor.

The enzyme catalyses (S)-malate + a quinone = a quinol + oxaloacetate. It functions in the pathway carbohydrate metabolism; tricarboxylic acid cycle; oxaloacetate from (S)-malate (quinone route): step 1/1. The sequence is that of Probable malate:quinone oxidoreductase from Flavobacterium psychrophilum (strain ATCC 49511 / DSM 21280 / CIP 103535 / JIP02/86).